The chain runs to 368 residues: 3-dehydroquinate synthase (368 aa).

NAD(+) contacts are provided by residues 69–74, 103–107, 127–128, K140, and K149; these read DGEAYK, GVIGD, and TT. Positions 182, 245, and 262 each coordinate Zn(2+).

The protein belongs to the sugar phosphate cyclases superfamily. Dehydroquinate synthase family. Co(2+) serves as cofactor. Zn(2+) is required as a cofactor. It depends on NAD(+) as a cofactor.

Its subcellular location is the cytoplasm. The enzyme catalyses 7-phospho-2-dehydro-3-deoxy-D-arabino-heptonate = 3-dehydroquinate + phosphate. It participates in metabolic intermediate biosynthesis; chorismate biosynthesis; chorismate from D-erythrose 4-phosphate and phosphoenolpyruvate: step 2/7. Functionally, catalyzes the conversion of 3-deoxy-D-arabino-heptulosonate 7-phosphate (DAHP) to dehydroquinate (DHQ). This is 3-dehydroquinate synthase from Pseudomonas paraeruginosa (strain DSM 24068 / PA7) (Pseudomonas aeruginosa (strain PA7)).